A 348-amino-acid polypeptide reads, in one-letter code: Dihydroorotase (348 aa).

2 residues coordinate Zn(2+): His-14 and His-16. Residues 16–18 (HLR) and Asn-42 contribute to the substrate site. Positions 100, 137, and 175 each coordinate Zn(2+). At Lys-100 the chain carries N6-carboxylysine. His-137 is a binding site for substrate. A substrate-binding site is contributed by Leu-220. Asp-248 contributes to the Zn(2+) binding site. Asp-248 is an active-site residue. Positions 252 and 264 each coordinate substrate.

This sequence belongs to the metallo-dependent hydrolases superfamily. DHOase family. Class II DHOase subfamily. As to quaternary structure, homodimer. Zn(2+) serves as cofactor.

It carries out the reaction (S)-dihydroorotate + H2O = N-carbamoyl-L-aspartate + H(+). The protein operates within pyrimidine metabolism; UMP biosynthesis via de novo pathway; (S)-dihydroorotate from bicarbonate: step 3/3. Catalyzes the reversible cyclization of carbamoyl aspartate to dihydroorotate. This chain is Dihydroorotase, found in Pseudomonas putida (strain ATCC 47054 / DSM 6125 / CFBP 8728 / NCIMB 11950 / KT2440).